The primary structure comprises 431 residues: C4-dicarboxylate transport protein (431 aa).

8 consecutive transmembrane segments (helical) span residues 8–28 (ILYV…HFWP), 44–64 (LIKM…IAGM), 78–98 (LLYF…AAHL), 148–168 (GDIL…AAIG), 188–208 (IVHV…AFTI), 222–242 (LIGT…GAIA), 307–327 (IYMT…LTLL), and 355–375 (AATL…ILGI).

This sequence belongs to the dicarboxylate/amino acid:cation symporter (DAACS) (TC 2.A.23) family.

The protein localises to the cell inner membrane. Its function is as follows. Responsible for the transport of dicarboxylates such as succinate, fumarate, and malate from the periplasm across the membrane. This is C4-dicarboxylate transport protein from Cupriavidus pinatubonensis (strain JMP 134 / LMG 1197) (Cupriavidus necator (strain JMP 134)).